The chain runs to 461 residues: METLFNGTLSLAGRDQETTGFAWWAGNARLINLSGKLLGAHVAHAGLIVFWAGAMNLFEVAHFVPEKPMYEQGLILLPHLATLGWGVGPGGEVIDTFPYFVSGVLHLISSAVLGFGGIYHALLGPETLEESFPFFGYVWKDRNKMTTILGIHLILLGLGAFLLVFKALYFGGVYDTWAPGGGDVRKITNLTLSPSVIFGYLLKSPFGGEGWIVSVDDLEDIIGGHVWLGSICILGGIWHILTKPFAWARRAFVWSGEAYLSYSLAALAVFGFIACCFVWFNNTAYPSEFYGPTGPEASQAQAFTFLVRDQRLGANVGSAQGPTGLGKYLMRSPTGEVIFGGETMRFWDLRAPWLEPLRGPNGLDLSRLKKDIQPWQERRSAEYMTHAPLGSLNSVGGVATEINAVNYVSPRSWLATSHFVLGFFLFVGHLWHAGRARAAAAGFEKGIDRDLEPVLSMTPLN.

A propeptide spanning residues 1 to 2 is cleaved from the precursor; that stretch reads ME. Threonine 3 bears the N-acetylthreonine mark. Phosphothreonine is present on threonine 3. The next 5 helical transmembrane spans lie at 57–81, 122–143, 166–188, 243–263, and 279–300; these read LFEV…PHLA, LLGP…KDRN, KALY…RKIT, KPFA…LSYS, and WFNN…ASQA. Residue glutamate 355 coordinates [CaMn4O5] cluster. Residues 435–459 form a helical membrane-spanning segment; sequence RARAAAAGFEKGIDRDLEPVLSMTP.

Belongs to the PsbB/PsbC family. PsbC subfamily. As to quaternary structure, PSII is composed of 1 copy each of membrane proteins PsbA, PsbB, PsbC, PsbD, PsbE, PsbF, PsbH, PsbI, PsbJ, PsbK, PsbL, PsbM, PsbT, PsbX, PsbY, PsbZ, Psb30/Ycf12, at least 3 peripheral proteins of the oxygen-evolving complex and a large number of cofactors. It forms dimeric complexes. The cofactor is Binds multiple chlorophylls and provides some of the ligands for the Ca-4Mn-5O cluster of the oxygen-evolving complex. It may also provide a ligand for a Cl- that is required for oxygen evolution. PSII binds additional chlorophylls, carotenoids and specific lipids..

Its subcellular location is the plastid. The protein localises to the chloroplast thylakoid membrane. In terms of biological role, one of the components of the core complex of photosystem II (PSII). It binds chlorophyll and helps catalyze the primary light-induced photochemical processes of PSII. PSII is a light-driven water:plastoquinone oxidoreductase, using light energy to abstract electrons from H(2)O, generating O(2) and a proton gradient subsequently used for ATP formation. This is Photosystem II CP43 reaction center protein from Ceratophyllum demersum (Rigid hornwort).